Reading from the N-terminus, the 34-residue chain is Photosystem II reaction center protein M (34 aa).

Residues 5 to 25 (ILALIAVALFISIPTAFLVII) traverse the membrane as a helical segment.

It belongs to the PsbM family. In terms of assembly, PSII is composed of 1 copy each of membrane proteins PsbA, PsbB, PsbC, PsbD, PsbE, PsbF, PsbH, PsbI, PsbJ, PsbK, PsbL, PsbM, PsbT, PsbX, PsbY, PsbZ, Psb30/Ycf12, at least 3 peripheral proteins of the oxygen-evolving complex and a large number of cofactors. It forms dimeric complexes.

The protein resides in the plastid. It localises to the chloroplast thylakoid membrane. In terms of biological role, one of the components of the core complex of photosystem II (PSII). PSII is a light-driven water:plastoquinone oxidoreductase that uses light energy to abstract electrons from H(2)O, generating O(2) and a proton gradient subsequently used for ATP formation. It consists of a core antenna complex that captures photons, and an electron transfer chain that converts photonic excitation into a charge separation. This subunit is found at the monomer-monomer interface. This is Photosystem II reaction center protein M from Welwitschia mirabilis (Tree tumbo).